The primary structure comprises 202 residues: Small ribosomal subunit protein uS4 (202 aa).

The tract at residues 16–43 (GELPGLSRKTPRRAYPPGQHGQGRRKRS) is disordered. The S4 RNA-binding domain maps to 90–152 (MRLDNTVFRL…DNSRRMVETN (63 aa)).

The protein belongs to the universal ribosomal protein uS4 family. In terms of assembly, part of the 30S ribosomal subunit. Contacts protein S5. The interaction surface between S4 and S5 is involved in control of translational fidelity.

Its function is as follows. One of the primary rRNA binding proteins, it binds directly to 16S rRNA where it nucleates assembly of the body of the 30S subunit. Functionally, with S5 and S12 plays an important role in translational accuracy. In Crocosphaera subtropica (strain ATCC 51142 / BH68) (Cyanothece sp. (strain ATCC 51142)), this protein is Small ribosomal subunit protein uS4.